Consider the following 79-residue polypeptide: Protein VdcD (79 aa).

In terms of biological role, involved in the non-oxidative decarboxylation and detoxification of phenolic derivatives under both aerobic and anaerobic conditions, however the precise biochemical function of VdcD in metabolism of phenolic acid is unknown. The protein is Protein VdcD of Streptomyces sp. (strain D7).